Here is a 527-residue protein sequence, read N- to C-terminus: Probable protein kinase UbiB (527 aa).

A Protein kinase domain is found at 123–527 (EFNETALASA…AIWLLIYLLS (405 aa)). Residues 129-137 (LASASIAQV) and K161 each bind ATP. D296 (proton acceptor) is an active-site residue. A helical transmembrane segment spans residues 506–526 (FTSFILGLCTGLAIWLLIYLL).

Belongs to the ABC1 family. UbiB subfamily.

It is found in the cell inner membrane. It participates in cofactor biosynthesis; ubiquinone biosynthesis [regulation]. Is probably a protein kinase regulator of UbiI activity which is involved in aerobic coenzyme Q (ubiquinone) biosynthesis. The chain is Probable protein kinase UbiB from Pasteurella multocida (strain Pm70).